Reading from the N-terminus, the 538-residue chain is ATP synthase subunit alpha, mitochondrial (538 aa).

Residue 197–204 participates in ATP binding; sequence GDRQTGKT. The segment at 228–248 is essential and sufficient for enterobactin binding; sequence FCIYVAVGQKRSTVAQIVKRL.

The protein belongs to the ATPase alpha/beta chains family. In terms of assembly, subunit of the F-type ATPase which has 2 components, CF(1) - the catalytic core - and CF(0) - the membrane proton channel. As to expression, ubiquitous (at protein level).

It is found in the mitochondrion. Its subcellular location is the mitochondrion inner membrane. Mitochondrial membrane ATP synthase (F(1)F(0) ATP synthase or Complex V) produces ATP from ADP in the presence of a proton gradient across the membrane which is generated by electron transport complexes of the respiratory chain. F-type ATPases consist of two structural domains, F(1) - containing the extramembraneous catalytic core, and F(0) - containing the membrane proton channel, linked together by a central stalk and a peripheral stalk. During catalysis, ATP synthesis in the catalytic domain of F(1) is coupled via a rotary mechanism of the central stalk subunits to proton translocation. Subunits alpha and beta form the catalytic core in F(1). Rotation of the central stalk against the surrounding subunits leads to hydrolysis of ATP in three separate catalytic sites on the beta subunits. Subunit alpha does not bear the catalytic high-affinity ATP-binding sites. Binds the bacterial siderophore enterobactin and is required for the assimilation of enterobactin-bound iron from non-pathogenic bacteria. Promotes mitochondrial accumulation of enterobactin-derived iron ions. This Caenorhabditis elegans protein is ATP synthase subunit alpha, mitochondrial.